The primary structure comprises 351 residues: Minor outer capsid protein P9 (351 aa).

Disordered stretches follow at residues 245 to 281 (GGVPAALPQPDTTDDESPVTKPGASAPTVSKGADQPE) and 288 to 307 (KKVDASKDAPPKAVSSGNVS). Over residues 288 to 297 (KKVDASKDAP) the composition is skewed to basic and acidic residues.

It belongs to the phytoreovirus minor outer capsid protein P9 family.

The protein localises to the virion. Its subcellular location is the host cytoplasm. Its function is as follows. Minor outer capsid protein. The polypeptide is Minor outer capsid protein P9 (Rice dwarf virus (RDV)).